A 937-amino-acid chain; its full sequence is MELAKSFEPGNIENRWYDRWEAAGYFKPSMDTDRPSFCIQLPPPNVTGTLHMGHAFNQTIMDGLTRYYRMKGDNTLWVPGADHAGIATQIVVERQLAEQGVSRHDLGRDTFIGKVWEWKEKSGGTITSQMRRVGCSVDWDKEYFTMDDKMSTAVTEVFVRLYEQGLIYRGKRLVNWDPKLGTAVSDLEVISEEEDGKMWHIRYPVVGSDDVVVVATTRPETLLGDVAVAVNPDDERYRHLVGKQLELPLTGRTIPVIADDYVDAAFGTGFVKITPAHDFNDYQVGKRHNTALINVMSLDATMLAKAQVFGFDGSAQGSIDLPAAYAGLSTADARKAMLADLDAAGLLVDTKPHKLMVPRGDRTGSVIEPLLTDQWFVAMTKVGEGDATGKSITQKAIDAVESGEVRFVPENWVNTYNQWMNNIQDWCISRQLWWGHQIPAWYDEDGKAYVGRTLEEVQAKAPGKTLRRDEDVLDTWFSSALVPFSSLGWPNETPELKAFVPSQVLVTGYEIIFFWVARMIMMTTHFLGKVPFKDVYIHGIVRDHEGKKMSKSEGNVIDPVDLIDGIALPELITKRTTGLRRPEKAPQIVKATEKLFPEGIPAYGTDALRFTMASYASLGRSVNFDFKRAEGYRNFCNKLWNATRFVMMNVEGKDCGQDESLPLEYSFVDKWIISRLQELEAAVTEALDTYRFDMASQLIYEFVWNEYCDWYVELAKVQLANGNEAQQRATRRTLVRVLEVALRLTHPLMPFITEELWQTVAPLANAKKTDSIMVAAWPVADMSKVDAEACGRMTVFKELVNAIRNLRGEMNLGPSVKAPLFVEGPAAYADFLPYARLLGRLSDAAVVEKLPDADAPVAIAGEARLMLKVEIDKAAETARLTKEIGKAESDVEKLTAKLEKPGYVDKAPAQLVERDRAQLADLTDKLAKLKAQLLKLA.

Positions 44–54 (PNVTGTLHMGH) match the 'HIGH' region motif. The 'KMSKS' region motif lies at 548–552 (KMSKS). K551 provides a ligand contact to ATP. The stretch at 874 to 937 (AAETARLTKE…KLKAQLLKLA (64 aa)) forms a coiled coil.

This sequence belongs to the class-I aminoacyl-tRNA synthetase family. ValS type 1 subfamily. In terms of assembly, monomer.

It localises to the cytoplasm. It catalyses the reaction tRNA(Val) + L-valine + ATP = L-valyl-tRNA(Val) + AMP + diphosphate. Functionally, catalyzes the attachment of valine to tRNA(Val). As ValRS can inadvertently accommodate and process structurally similar amino acids such as threonine, to avoid such errors, it has a 'posttransfer' editing activity that hydrolyzes mischarged Thr-tRNA(Val) in a tRNA-dependent manner. The sequence is that of Valine--tRNA ligase from Laribacter hongkongensis (strain HLHK9).